Consider the following 998-residue polypeptide: MTIKIILGEHQITRTELLGGIVIVSGCGAVAYCISKFWGYGAIAPYPQSGGNRVTRALQRAVIDKTKTPIKTHFYPLDSLRTVTPRRASDNGHAVSGAVRDAARRLINESIETVGGSKFELNPNPNSTMGPRNHFHFAVGDLAQNFRDDQPAADAFIVGVDVDYYITEPDVLLEHMRPLVLHTFNPKKVSGFDADSPFTINNNLVEYKVSGGAAWVHPVWDWCEAGEFIASRVRSSWFEWLLQLPLRCLGLERVGYHKIHHCRPWTDCPDRALVYTIPQHTVWRFTWIDTEIHTRKLKRITYQDNTKPGWNRLEHVSDNNQLLVSIGREGEHMQITIEKDKLEMLSGLGATQSVNARLIGMGHKDPLYTSMIVQYYTGKKVVLSVAPTVYRPTMPRVHWPVTSDADVPEVSARQYTKPIISDCMMMPMIKRWETMSESIERRVTFVANNKKPSDAVAKIAAEFVSLMNGPFIDLEPLTIEETVERLNKPSQQLQLRAVFEIMGVEPRQVIESFNKNEPGMKSSRIISAFPDILFIVKVSRYTLAYSDAVLHAEHNQHWYYPGRTPVGITDGVCEFVSDCDGQVIETDFSNLDGRVSGWMQRNIAQKAMVQAFRAEYRDEIISFMDTIINCPAKAKRFGFRYEPGMGVKSGSPTTTPHNTQYNACVEYTALKFEYPDANPEDLFSLLGPKCGDDGLARATIQKTINRAAKCYGLELKVEKYNPEVGLCFLSRVFVDPLNTPTTIQDPLRTLRKLHITTRDPTIPIADAACDRVEGYLCTDAHTPLISEYCRMVQRLYGPKTSTRDVREARRSRNKEKPYWLTCDGSWPQHPQDALLMKQIVVSRTGIDEDTVDKLIGRFAAMKDVWEPITLESEESKAAQTIDEEGVAPGSVDESLLKLNDAKQTRSNSGTSGPHTKGGGSGTGNELPRSTKQRAKGPRQSAGLPKQGKANSKPNGNVAAGQAQHGGIPRGKTPSGGKTNARRAPPKAGAQPGAPTNPK.

The chain crosses the membrane as a helical span at residues 21 to 43 (IVIVSGCGAVAYCISKFWGYGAI). Residues 44-998 (APYPQSGGNR…AQPGAPTNPK (955 aa)) are cytoplasmic. The interval 91–282 (NGHAVSGAVR…LVYTIPQHTV (192 aa)) is capping. The active-site For RdRp/TNTase activity is Asp692. Residues 901-998 (AKQTRSNSGT…AQPGAPTNPK (98 aa)) are disordered. Residues 985–998 (PKAGAQPGAPTNPK) are compositionally biased toward low complexity.

It belongs to the nodaviridae RNA polymerase family. Homododecamer. Forms 2 stacked rings of 35-nm in diameter, arranged in a crown-like structure at the opening of virus-induced replication vesicles. Interacts with protein B2. Requires Mn(2+) as cofactor.

It is found in the host mitochondrion outer membrane. It carries out the reaction RNA(n) + a ribonucleoside 5'-triphosphate = RNA(n+1) + diphosphate. Functionally, RNA-dependent RNA polymerase, which replicates the viral genome composed of 2 RNA segments, RNA1 and RNA2. Does not need an exogenous primer. Also possesses a terminal nucleotidyl transferase (TNTase) activity. The TNTase catalyzes the addition of nucleotide to the 3'-end of plus- and minus-stranded RNAs, probably to repair the 3'-end nucleotide loss. Forms the open necked connection to the cytosol of the virus-induced replication vesicles. Mediates viral RNA1 recruitment. The protein is RNA-directed RNA polymerase of Hepialidae (ghost moths).